The following is a 1516-amino-acid chain: MRILPSPGMPALLSLVSLLSVLLMGCVAESPPVFIKKPVDQIGVSGGVASFVCQATGDPKPRVTWNKKGKKVNSQRFETIEFDESAGAVLRIQPLRTPRDENIYECVAQNPHGEVTVHAKLTVLREDQLPPGFPNIDMGPQLKVVERTRTATMLCAASGNPDPEITWFKDFLPVDPSTSNGRIKQLRSGGLQIESSEETDQGKYECVASNSAGVRYSSPANLYVRELREVRRVAPRFSILPVSHEIMPGGNVNITCVAVGSPMPYVKWMQGAEDLTPEDDMPVGRNVLELTDVKDSANYTCVAMSSLGVIEAVAQITVKSLPKAPGTPVVTETTATSITITWDSGNPDPVSYYVIEYKSKSQDGPYQIKEDITTTRYSIGGLSPNSEYEIWVSAVNSIGQGPPSESVVTRTGEQAPASAPRNVQGRMLSSTTMIIQWEEPVEPNGQIRGYRVYYTMEPDQPVSNWQKHNVDDSLLTTVGSLLEDETYTVRVLAFTSVGDGPLSDPIQVKTQQGVPGQPMNFRAEAKTETSIVLSWSPPRQEIIVKYELLFKEGDHGREVPRNFEPTTSFTVEGLKPNTEYVFRLAARSALGLGAFTPEVRERTLQSILPKNFKVKMVTKTSVLLSWEFPENYNSPTPYKIQYNGLNVDVDGRTTKKLITNLKPHTFYNFVLMNRGNSMGGLQQNVAAWTAANMLSRKPEVTHKPDADGNVVVILPDVKSSVAVQAYYIVVVPLRKSRGGQFLNPLGSPEEMDLEELIQDIARLRRRSLRHSRQLDFPKPYIAARFRSLPNHFVLGDMKHYDNFENRALEPGQRYVIFILAVLQEPEATFAASPFSDPIQLDNPDPQPIIDGEEGLIWVIGPVLAVVFIICIVIAILLYKNKRKDSEPRTKCLLNNAEITPHHPKDPVEMRRINFQTPDSGLSSPLSDPEFDFESMLSHPPIPVSELAEHTEHLKANDNLKLSQEYESIDPGQQFTWEHSNLEVNKPKNRYANVIAYDHSRVILLPIEGIVGSDYINANYIDGYRKQNAYIATQGPLPETFGDFWRMVWEQRSATIVMMTKLEEKSRIKCDQYWPGRGTDTYGMIQVTLLDTIELATFCVRTFSLHKNGSSEKREVRQFQFTAWPDHGVPEYPTPFLAFLRRVKTCNPPDAGPIVVHCSAGVGRTGCFIVIDAMLERIKHEKTVDIYGHVTLMRSQRNYMVQTEDQYSFIHDALLEAVACGNTEVPARNLYTYIQKLAQIEVGEHVTGMELEFKRLANSKAHTSRFISANLPCNKFKNRLVNIMPYETTRVCLQPIRGVEGSDYINASFIDGYRQQKAYIATQGPLAETTEDFWRMLWEHNSTIVVMLTKLREMGREKCHQYWPAERSARYQYFVVDPMAEYNMPQYILREFKVTDARDGQSRTVRQFQFTDWPEQGVPKSGEGFIDFIGQVHKTKEQFGQDGPISVHCSAGVGRTGVFITLSIVLERMRYEGVVDIFQTVKMLRTQRPAMVQTEDEYQFCYQAALEYLGSFDHYAT.

A signal peptide spans 1–28; sequence MRILPSPGMPALLSLVSLLSVLLMGCVA. Over 29–854 the chain is Extracellular; it reads ESPPVFIKKP…PQPIIDGEEG (826 aa). Ig-like C2-type domains are found at residues 32–122, 134–223, and 235–317; these read PVFI…AKLT, PNID…ANLY, and PRFS…AQIT. Intrachain disulfides connect Cys53-Cys106 and Cys155-Cys206. The important for binding to glycosaminoglycan chains stretch occupies residues 67–71; the sequence is KKGKK. N-linked (GlcNAc...) asparagine glycans are attached at residues Asn253 and Asn298. A disulfide bridge connects residues Cys256 and Cys301. 4 Fibronectin type-III domains span residues 324–414, 419–513, 517–606, and 608–692; these read APGT…TGEQ, APRN…TQQG, QPMN…TLQS, and LPKN…TAAN. The chain crosses the membrane as a helical span at residues 855–875; it reads LIWVIGPVLAVVFIICIVIAI. Topologically, residues 876–1516 are cytoplasmic; that stretch reads LLYKNKRKDS…YLGSFDHYAT (641 aa). Tyrosine-protein phosphatase domains are found at residues 961–1216 and 1248–1507; these read LSQE…LLEA and MELE…ALEY. Catalysis depends on phosphocysteine intermediate residues Cys1157 and Cys1448.

It belongs to the protein-tyrosine phosphatase family. Receptor class 2A subfamily. As to quaternary structure, homodimer. Binding to large heparan sulfate proteoglycan structures promotes oligomerization. Binding to chondroitin sulfate proteoglycan does not lead to oligomerization. Interacts (via Ig-like domains) with NTRK1 and NTRK3, but does not form detectable complexes with NTRK2. Interacts (via extracellular domain) with the heparan sulfate proteoglycans AGRN and COL18A1. Post-translationally, a cleavage occurs, separating the extracellular domain from the transmembrane segment. This process called 'ectodomain shedding' is thought to be involved in receptor desensitization, signal transduction and/or membrane localization. In terms of tissue distribution, detected in embryonic brain, dorsal root ganglion and spinal cord. Detected in embryonic retina (at protein level). Detected in embryonic brain, spinal cord, dorsal root ganglion, trigeminal ganglion, ganglia associated with the precardinal vein and vagus nerve, the inner and outer nuclear layer of the retina, limb, breast muscle, heart, gut and lung.

Its subcellular location is the cell membrane. The protein resides in the cell projection. It is found in the axon. It localises to the perikaryon. The protein localises to the cytoplasmic vesicle. Its subcellular location is the secretory vesicle. The protein resides in the synaptic vesicle membrane. It is found in the synapse. It localises to the synaptosome. The protein localises to the postsynaptic density. Its subcellular location is the neuron projection. The protein resides in the growth cone. The catalysed reaction is O-phospho-L-tyrosyl-[protein] + H2O = L-tyrosyl-[protein] + phosphate. Functionally, cell surface receptor that binds to glycosaminoglycans, including chondroitin sulfate proteoglycans and heparan sulfate proteoglycans. Binding to chondroitin sulfate and heparan sulfate proteoglycans has opposite effects on PTPRS oligomerization and regulation of neurite outgrowth. Contributes to the inhibition of neurite and axonal outgrowth by chondroitin sulfate proteoglycans, also after nerve transection. Plays a role in stimulating neurite outgrowth in response to the heparan sulfate proteoglycan GPC2. Required for normal brain development, especially for normal development of the pituitary gland and the olfactory bulb. Functions as tyrosine phosphatase. Mediates dephosphorylation of NTRK1, NTRK2 and NTRK3. Plays a role in down-regulation of signaling cascades that lead to the activation of Akt and MAP kinases. Down-regulates TLR9-mediated activation of NF-kappa-B, as well as production of TNF, interferon alpha and interferon beta. This chain is Receptor-type tyrosine-protein phosphatase S (PTPRS), found in Gallus gallus (Chicken).